The following is a 184-amino-acid chain: dITP/XTP pyrophosphatase (184 aa).

5 to 10 provides a ligand contact to substrate; sequence SSNRHK. Residues glutamate 33 and aspartate 62 each contribute to the Mg(2+) site. The active-site Proton acceptor is aspartate 62. Substrate is bound by residues serine 63, 136-139, lysine 158, and 163-164; these read WGFD and HR.

This sequence belongs to the HAM1 NTPase family. Homodimer. Requires Mg(2+) as cofactor.

The enzyme catalyses XTP + H2O = XMP + diphosphate + H(+). It catalyses the reaction dITP + H2O = dIMP + diphosphate + H(+). The catalysed reaction is ITP + H2O = IMP + diphosphate + H(+). In terms of biological role, pyrophosphatase that catalyzes the hydrolysis of nucleoside triphosphates to their monophosphate derivatives, with a high preference for the non-canonical purine nucleotides XTP (xanthosine triphosphate), dITP (deoxyinosine triphosphate) and ITP. Seems to function as a house-cleaning enzyme that removes non-canonical purine nucleotides from the nucleotide pool, thus preventing their incorporation into DNA/RNA and avoiding chromosomal lesions. This is dITP/XTP pyrophosphatase from Korarchaeum cryptofilum (strain OPF8).